A 554-amino-acid polypeptide reads, in one-letter code: Valerianol synthase TPS8 (554 aa).

A DDXXD motif motif is present at residues 288–292 (QHSVG). Mg(2+) is bound by residues Asp-307, Asp-311, Asp-452, Ser-456, and Glu-460.

This sequence belongs to the terpene synthase family. Mg(2+) is required as a cofactor.

The catalysed reaction is (2E,6E)-farnesyl diphosphate + H2O = valerianol + diphosphate. It participates in secondary metabolite biosynthesis; terpenoid biosynthesis. In terms of biological role, terpene synthase that catalyzes the biosynthesis of the terpene valerianol. The chain is Valerianol synthase TPS8 from Camellia sinensis (Tea plant).